Consider the following 185-residue polypeptide: Elongation factor P (185 aa).

Belongs to the elongation factor P family.

It localises to the cytoplasm. It functions in the pathway protein biosynthesis; polypeptide chain elongation. Its function is as follows. Involved in peptide bond synthesis. Stimulates efficient translation and peptide-bond synthesis on native or reconstituted 70S ribosomes in vitro. Probably functions indirectly by altering the affinity of the ribosome for aminoacyl-tRNA, thus increasing their reactivity as acceptors for peptidyl transferase. This Burkholderia mallei (strain NCTC 10247) protein is Elongation factor P.